A 295-amino-acid polypeptide reads, in one-letter code: Large ribosomal subunit protein uL29m (295 aa).

This sequence belongs to the universal ribosomal protein uL29 family. Component of the mitochondrial large ribosomal subunit. Mature mitochondrial ribosomes consist of a small (37S) and a large (54S) subunit. The 37S subunit contains at least 33 different proteins and 1 molecule of RNA (15S). The 54S subunit contains at least 45 different proteins and 1 molecule of RNA (21S).

It localises to the mitochondrion. This Meyerozyma guilliermondii (strain ATCC 6260 / CBS 566 / DSM 6381 / JCM 1539 / NBRC 10279 / NRRL Y-324) (Yeast) protein is Large ribosomal subunit protein uL29m (MRPL4).